Here is a 635-residue protein sequence, read N- to C-terminus: Threonine--tRNA ligase (635 aa).

Residues Met1–Thr61 enclose the TGS domain. A catalytic region spans residues Asp242–Pro533. Residues Cys333, His384, and His510 each contribute to the Zn(2+) site.

The protein belongs to the class-II aminoacyl-tRNA synthetase family. Homodimer. Requires Zn(2+) as cofactor.

It localises to the cytoplasm. The enzyme catalyses tRNA(Thr) + L-threonine + ATP = L-threonyl-tRNA(Thr) + AMP + diphosphate + H(+). In terms of biological role, catalyzes the attachment of threonine to tRNA(Thr) in a two-step reaction: L-threonine is first activated by ATP to form Thr-AMP and then transferred to the acceptor end of tRNA(Thr). Also edits incorrectly charged L-seryl-tRNA(Thr). The chain is Threonine--tRNA ligase from Francisella philomiragia subsp. philomiragia (strain ATCC 25017 / CCUG 19701 / FSC 153 / O#319-036).